Here is a 2694-residue protein sequence, read N- to C-terminus: Teneurin-3 (2694 aa).

Disordered stretches follow at residues Met1–Glu45, Pro106–Ser132, and Thr161–Thr198. One can recognise a Teneurin N-terminal domain in the interval Met1 to Cys306. Topologically, residues Met1–Met312 are cytoplasmic. Residues Pro163–Leu184 are compositionally biased toward polar residues. The chain crosses the membrane as a helical span at residues Ala313–Leu333. The Extracellular segment spans residues Asn334–Arg2694. N-linked (GlcNAc...) asparagine glycosylation is found at Asn374 and Asn413. 8 consecutive EGF-like domains span residues Thr508–Ser539, Arg540–Asp570, Pro572–Glu604, Glu605–Glu636, Leu638–Ser671, Ile672–Leu703, Lys704–Thr733, and Val734–Asp768. 22 disulfides stabilise this stretch: Cys512/Cys522, Cys516/Cys527, Cys529/Cys538, Cys547/Cys558, Cys560/Cys569, Cys576/Cys587, Cys581/Cys592, Cys594/Cys603, Cys608/Cys619, Cys613/Cys624, Cys626/Cys635, Cys646/Cys659, Cys661/Cys670, Cys675/Cys685, Cys679/Cys690, Cys692/Cys701, Cys706/Cys716, Cys710/Cys721, Cys723/Cys732, Cys737/Cys747, Cys741/Cys756, and Cys758/Cys767. An N-linked (GlcNAc...) asparagine glycan is attached at Asn664. Asn854, Asn877, and Asn1048 each carry an N-linked (GlcNAc...) asparagine glycan. NHL repeat units follow at residues Leu1166–Phe1192, Ser1194–Leu1238, Ala1264–Ile1308, Cys1325–Asn1365, and Cys1452–Asn1495. Asn1196 carries N-linked (GlcNAc...) asparagine glycosylation. One copy of the YD 1 repeat lies at Phe1505–His1524. Residues Asn1521 and Asn1538 are each glycosylated (N-linked (GlcNAc...) asparagine). 3 YD repeats span residues Tyr1541–Arg1561, Tyr1604–Phe1623, and Tyr1624–Ile1646. N-linked (GlcNAc...) asparagine glycosylation is found at Asn1634, Asn1671, Asn1729, and Asn1814. 18 YD repeats span residues Tyr1817–Glu1836, Tyr1858–Asp1876, Tyr1877–Gln1897, Tyr1904–Asp1921, Tyr1922–Lys1943, Tyr1944–Ser1961, Tyr1964–Ser1984, Tyr1987–Val2007, Tyr2015–Pro2034, Phe2040–Tyr2057, Tyr2058–Ile2084, Tyr2086–Gln2099, Tyr2100–Gly2123, Tyr2126–Asn2146, Tyr2147–Leu2167, Tyr2169–Gly2189, Tyr2201–Tyr2221, and Tyr2223–Phe2243. The N-linked (GlcNAc...) asparagine glycan is linked to Asn1915. N-linked (GlcNAc...) asparagine glycosylation is present at Asn2118. A glycan (N-linked (GlcNAc...) asparagine) is linked at Asn2258. A YD 23 repeat occupies Tyr2269–Val2310. Residue Asn2571 is glycosylated (N-linked (GlcNAc...) asparagine).

Belongs to the tenascin family. Teneurin subfamily. Homodimer; disulfide-linked; to mediate homophilic cell adhesion. Expressed by retinal ganglion cells and their presynaptic amacrine and postsynaptic tectal cell targets.

The protein localises to the cell membrane. The protein resides in the cell projection. Its subcellular location is the axon. Involved in neural development by regulating the establishment of proper connectivity within the nervous system. Acts in both pre- and postsynaptic neurons in the hippocampus to control the assembly of a precise topographic projection: required in both CA1 and subicular neurons for the precise targeting of proximal CA1 axons to distal subiculum, probably by promoting homophilic cell adhesion. Required by retinal ganglion cells for acquisition of their correct morphological and functional connectivity, thereby playing a key role in the development of the visual pathway. The sequence is that of Teneurin-3 (tenm3) from Danio rerio (Zebrafish).